Reading from the N-terminus, the 197-residue chain is MAEEIERVGRLVVFSAPSGTGKSTIARRVLERFPSMRFSVSATTRPMREGEVDGVNYHFLSKEDFESEIRNGGFIEHEFFFGNHYGTLLQKTREAMAQGTDLLLDLDVKGAMNLKKLFPDSSLLVFLAPPSMDVLKERLQSRKSEDEESLKLRLERARLELGFADRFDTVIINDTLEDAVEAVILAISNFLSTKQTT.

The Guanylate kinase-like domain occupies 9–188 (GRLVVFSAPS…AVEAVILAIS (180 aa)). 16-23 (APSGTGKS) provides a ligand contact to ATP.

This sequence belongs to the guanylate kinase family.

It is found in the cytoplasm. It catalyses the reaction GMP + ATP = GDP + ADP. In terms of biological role, essential for recycling GMP and indirectly, cGMP. In Chlorobium luteolum (strain DSM 273 / BCRC 81028 / 2530) (Pelodictyon luteolum), this protein is Guanylate kinase.